A 197-amino-acid polypeptide reads, in one-letter code: dTTP/UTP pyrophosphatase (197 aa).

Asp-70 serves as the catalytic Proton acceptor.

Belongs to the Maf family. YhdE subfamily. It depends on a divalent metal cation as a cofactor.

It localises to the cytoplasm. The catalysed reaction is dTTP + H2O = dTMP + diphosphate + H(+). The enzyme catalyses UTP + H2O = UMP + diphosphate + H(+). Its function is as follows. Nucleoside triphosphate pyrophosphatase that hydrolyzes dTTP and UTP. May have a dual role in cell division arrest and in preventing the incorporation of modified nucleotides into cellular nucleic acids. The polypeptide is dTTP/UTP pyrophosphatase (yceF) (Shigella dysenteriae serotype 1 (strain Sd197)).